The chain runs to 239 residues: Large ribosomal subunit protein bL25 (239 aa).

The disordered stretch occupies residues 217–239 (IKAEAHAAEGTQAEGSTEEGQQQ). The segment covering 229–239 (AEGSTEEGQQQ) has biased composition (polar residues).

It belongs to the bacterial ribosomal protein bL25 family. CTC subfamily. As to quaternary structure, part of the 50S ribosomal subunit; part of the 5S rRNA/L5/L18/L25 subcomplex. Contacts the 5S rRNA. Binds to the 5S rRNA independently of L5 and L18.

In terms of biological role, this is one of the proteins that binds to the 5S RNA in the ribosome where it forms part of the central protuberance. This is Large ribosomal subunit protein bL25 from Deinococcus deserti (strain DSM 17065 / CIP 109153 / LMG 22923 / VCD115).